The chain runs to 600 residues: Proline--tRNA ligase (600 aa).

The protein belongs to the class-II aminoacyl-tRNA synthetase family. ProS type 1 subfamily. Homodimer.

It localises to the cytoplasm. The catalysed reaction is tRNA(Pro) + L-proline + ATP = L-prolyl-tRNA(Pro) + AMP + diphosphate. In terms of biological role, catalyzes the attachment of proline to tRNA(Pro) in a two-step reaction: proline is first activated by ATP to form Pro-AMP and then transferred to the acceptor end of tRNA(Pro). As ProRS can inadvertently accommodate and process non-cognate amino acids such as alanine and cysteine, to avoid such errors it has two additional distinct editing activities against alanine. One activity is designated as 'pretransfer' editing and involves the tRNA(Pro)-independent hydrolysis of activated Ala-AMP. The other activity is designated 'posttransfer' editing and involves deacylation of mischarged Ala-tRNA(Pro). The misacylated Cys-tRNA(Pro) is not edited by ProRS. The chain is Proline--tRNA ligase from Prochlorococcus marinus (strain AS9601).